Reading from the N-terminus, the 331-residue chain is 6-phosphogluconolactonase (331 aa).

This sequence belongs to the cycloisomerase 2 family.

The enzyme catalyses 6-phospho-D-glucono-1,5-lactone + H2O = 6-phospho-D-gluconate + H(+). It participates in carbohydrate degradation; pentose phosphate pathway; D-ribulose 5-phosphate from D-glucose 6-phosphate (oxidative stage): step 2/3. Its function is as follows. Catalyzes the hydrolysis of 6-phosphogluconolactone to 6-phosphogluconate. The chain is 6-phosphogluconolactonase from Sodalis glossinidius (strain morsitans).